The sequence spans 205 residues: ATP-dependent Clp protease proteolytic subunit (205 aa).

The active-site Nucleophile is the S109. The active site involves H134.

Belongs to the peptidase S14 family. In terms of assembly, fourteen ClpP subunits assemble into 2 heptameric rings which stack back to back to give a disk-like structure with a central cavity, resembling the structure of eukaryotic proteasomes.

The protein localises to the cytoplasm. The enzyme catalyses Hydrolysis of proteins to small peptides in the presence of ATP and magnesium. alpha-casein is the usual test substrate. In the absence of ATP, only oligopeptides shorter than five residues are hydrolyzed (such as succinyl-Leu-Tyr-|-NHMec, and Leu-Tyr-Leu-|-Tyr-Trp, in which cleavage of the -Tyr-|-Leu- and -Tyr-|-Trp bonds also occurs).. Cleaves peptides in various proteins in a process that requires ATP hydrolysis. Has a chymotrypsin-like activity. Plays a major role in the degradation of misfolded proteins. The polypeptide is ATP-dependent Clp protease proteolytic subunit (Buchnera aphidicola subsp. Baizongia pistaciae (strain Bp)).